Reading from the N-terminus, the 355-residue chain is Endonuclease III homolog (355 aa).

The Nuclear localization signal motif lies at 44–50 (PKKFRFQ). In terms of domain architecture, HhH spans 122–149 (FQGDIPDTVEDLMTLPGVGPKMGYLCMS). The active-site Nucleophile; for N-glycosylase activity is K142. [4Fe-4S] cluster is bound by residues C210, C217, C220, and C228. The Nuclear localization signal signature appears at 252-255 (KKRP). The segment at 303–355 (KEPAADIDVDQKPPVAFHSTTKETRSLRRSKRVAKKSSQYFSQQSLQDIEDLV) is disordered. Polar residues predominate over residues 338–349 (KSSQYFSQQSLQ).

The protein belongs to the Nth/MutY family. [4Fe-4S] cluster serves as cofactor.

Its subcellular location is the nucleus. The protein localises to the mitochondrion. The catalysed reaction is 2'-deoxyribonucleotide-(2'-deoxyribose 5'-phosphate)-2'-deoxyribonucleotide-DNA = a 3'-end 2'-deoxyribonucleotide-(2,3-dehydro-2,3-deoxyribose 5'-phosphate)-DNA + a 5'-end 5'-phospho-2'-deoxyribonucleoside-DNA + H(+). In terms of biological role, bifunctional DNA N-glycosylase with associated apurinic/apyrimidinic (AP) lyase function that catalyzes the first step in base excision repair (BER), the primary repair pathway for the repair of oxidative DNA damage. The DNA N-glycosylase activity releases the damaged DNA base from DNA by cleaving the N-glycosidic bond, leaving an AP site. The AP-lyase activity cleaves the phosphodiester bond 3' to the AP site by a beta-elimination. Primarily recognizes and repairs oxidative base damage of pyrimidines. Also has 8-oxo-7,8-dihydroguanine (8-oxoG) DNA glycosylase activity. Also involved in the repair of 7-methylguanine lesions, although it cannot directly repair alkylated DNA bases. Probably does so via excision of methylformamidopyrimidine (mFapy) lesions, a spontaneous processing product of 7-methylguanine. This is Endonuclease III homolog (nth1) from Schizosaccharomyces pombe (strain 972 / ATCC 24843) (Fission yeast).